The chain runs to 350 residues: Eukaryotic translation initiation factor 3 subunit I (350 aa).

WD repeat units lie at residues 8–49 (GHER…GTLE), 51–89 (HQGV…CVFT), 91–135 (ESPS…ESLT), 149–188 (QDGA…AVNS), 198–240 (EKNV…KVYK), and 296–335 (GHFG…FDFY).

It belongs to the eIF-3 subunit I family. Component of the eukaryotic translation initiation factor 3 (eIF-3) complex.

The protein localises to the cytoplasm. Its function is as follows. Component of the eukaryotic translation initiation factor 3 (eIF-3) complex, which is involved in protein synthesis of a specialized repertoire of mRNAs and, together with other initiation factors, stimulates binding of mRNA and methionyl-tRNAi to the 40S ribosome. The eIF-3 complex specifically targets and initiates translation of a subset of mRNAs involved in cell proliferation. This is Eukaryotic translation initiation factor 3 subunit I from Scheffersomyces stipitis (strain ATCC 58785 / CBS 6054 / NBRC 10063 / NRRL Y-11545) (Yeast).